Reading from the N-terminus, the 507-residue chain is Cyclin-dependent kinase-like 2 (507 aa).

The Protein kinase domain occupies 4–289 (YENLGLVGEG…CADLLHHDFF (286 aa)). ATP contacts are provided by residues 10–18 (VGEGSYGMV) and lysine 33. A [NKR]KIAxRE motif is present at residues 45 to 51 (KKIAMRE). Aspartate 126 (proton acceptor) is an active-site residue. A disordered region spans residues 365 to 392 (KTEKGTRASNGSCLHDNGTSHKGLSSTS).

It belongs to the protein kinase superfamily. CMGC Ser/Thr protein kinase family. CDC2/CDKX subfamily.

Its subcellular location is the cytoplasm. It localises to the nucleus. It carries out the reaction L-seryl-[protein] + ATP = O-phospho-L-seryl-[protein] + ADP + H(+). The enzyme catalyses L-threonyl-[protein] + ATP = O-phospho-L-threonyl-[protein] + ADP + H(+). This chain is Cyclin-dependent kinase-like 2, found in Rattus norvegicus (Rat).